The sequence spans 676 residues: DNA ligase (676 aa).

NAD(+)-binding positions include 35–39, 84–85, and Glu-115; these read DNEYD and SL. Catalysis depends on Lys-117, which acts as the N6-AMP-lysine intermediate. NAD(+) is bound by residues Arg-138, Glu-177, Lys-294, and Lys-318. The Zn(2+) site is built by Cys-412, Cys-415, Cys-430, and Cys-436. Residues 595–676 form the BRCT domain; that stretch reads PTRQPLNGES…FLAFLAQYSA (82 aa).

Belongs to the NAD-dependent DNA ligase family. LigA subfamily. The cofactor is Mg(2+). Requires Mn(2+) as cofactor.

It catalyses the reaction NAD(+) + (deoxyribonucleotide)n-3'-hydroxyl + 5'-phospho-(deoxyribonucleotide)m = (deoxyribonucleotide)n+m + AMP + beta-nicotinamide D-nucleotide.. DNA ligase that catalyzes the formation of phosphodiester linkages between 5'-phosphoryl and 3'-hydroxyl groups in double-stranded DNA using NAD as a coenzyme and as the energy source for the reaction. It is essential for DNA replication and repair of damaged DNA. This is DNA ligase from Acinetobacter baylyi (strain ATCC 33305 / BD413 / ADP1).